The following is an 82-amino-acid chain: Delta-conotoxin SVIE (82 aa).

The N-terminal stretch at 1-22 is a signal peptide; it reads MKLTCVMIVAVLFLTTWTFVTA. Positions 23-51 are excised as a propeptide; sequence DDSRYGLKNLFPKARHEMKNPEASKLNKR. 3 disulfides stabilise this stretch: cysteine 54-cysteine 69, cysteine 61-cysteine 73, and cysteine 68-cysteine 77. Proline 65 is modified (4-hydroxyproline).

Belongs to the conotoxin O1 superfamily. Expressed by the venom duct.

Its subcellular location is the secreted. Functionally, delta-conotoxins bind to site 6 of voltage-gated sodium channels (Nav) and inhibit the inactivation process. Impairs rapid channel inactivation of Nav1.4/SCN4A (Kd=500 nM). Interacts with a conserved hydrophobic triad (YFV) in the domain-4 voltage sensor of sodium channels. In vivo, injection of both native or synthetic peptide induces twitching of back limbs, running in circles, and spastic paralysis. The polypeptide is Delta-conotoxin SVIE (SO6) (Conus striatus (Striated cone)).